Consider the following 262-residue polypeptide: Putative 1-acyl-sn-glycerol-3-phosphate acyltransferase acl-1 (262 aa).

Transmembrane regions (helical) follow at residues 3–23, 29–49, and 89–109; these read FLAI…PVIG, VYFG…SIPF, and IIIA…AWPV. Positions 94-99 match the HXXXXD motif motif; it reads HQSALD.

It belongs to the 1-acyl-sn-glycerol-3-phosphate acyltransferase family.

Its subcellular location is the membrane. It catalyses the reaction a 1-acyl-sn-glycero-3-phosphate + an acyl-CoA = a 1,2-diacyl-sn-glycero-3-phosphate + CoA. It participates in phospholipid metabolism; CDP-diacylglycerol biosynthesis; CDP-diacylglycerol from sn-glycerol 3-phosphate: step 2/3. Its function is as follows. Converts lysophosphatidic acid (LPA) into phosphatidic acid by incorporating an acyl moiety at the sn-2 position of the glycerol backbone. The sequence is that of Putative 1-acyl-sn-glycerol-3-phosphate acyltransferase acl-1 (acl-1) from Caenorhabditis elegans.